The sequence spans 275 residues: Large ribosomal subunit protein uL2 (275 aa).

Disordered stretches follow at residues 35-55 (EKQTRSSGRNNQGRVTTRHKG) and 223-260 (VAMNPVDHPHGGGEGRTSGGRHPVSPWGIPTKGYKTRN). Residues 39 to 49 (RSSGRNNQGRV) show a composition bias toward polar residues.

It belongs to the universal ribosomal protein uL2 family. As to quaternary structure, part of the 50S ribosomal subunit. Forms a bridge to the 30S subunit in the 70S ribosome.

Functionally, one of the primary rRNA binding proteins. Required for association of the 30S and 50S subunits to form the 70S ribosome, for tRNA binding and peptide bond formation. It has been suggested to have peptidyltransferase activity; this is somewhat controversial. Makes several contacts with the 16S rRNA in the 70S ribosome. The protein is Large ribosomal subunit protein uL2 of Methylococcus capsulatus (strain ATCC 33009 / NCIMB 11132 / Bath).